Reading from the N-terminus, the 207-residue chain is Ribosomal RNA small subunit methyltransferase G (207 aa).

Residues glycine 73, leucine 78, 124-125, and arginine 139 each bind S-adenosyl-L-methionine; that span reads VE.

This sequence belongs to the methyltransferase superfamily. RNA methyltransferase RsmG family.

It localises to the cytoplasm. The catalysed reaction is guanosine(527) in 16S rRNA + S-adenosyl-L-methionine = N(7)-methylguanosine(527) in 16S rRNA + S-adenosyl-L-homocysteine. Functionally, specifically methylates the N7 position of guanine in position 527 of 16S rRNA. This chain is Ribosomal RNA small subunit methyltransferase G, found in Klebsiella pneumoniae (strain 342).